A 247-amino-acid polypeptide reads, in one-letter code: Uridylate kinase (247 aa).

21–24 (KVSG) serves as a coordination point for ATP. Gly63 is a binding site for UMP. 2 residues coordinate ATP: Gly64 and Arg68. UMP-binding positions include Asp83 and 144-151 (TGNPFCTT). ATP-binding residues include Thr171, Gln172, Tyr177, and Asp180.

It belongs to the UMP kinase family. In terms of assembly, homohexamer.

Its subcellular location is the cytoplasm. It catalyses the reaction UMP + ATP = UDP + ADP. Its pathway is pyrimidine metabolism; CTP biosynthesis via de novo pathway; UDP from UMP (UMPK route): step 1/1. Its activity is regulated as follows. Inhibited by UTP. In terms of biological role, catalyzes the reversible phosphorylation of UMP to UDP. The polypeptide is Uridylate kinase (Rickettsia rickettsii (strain Sheila Smith)).